The primary structure comprises 503 residues: Aspartyl/glutamyl-tRNA(Asn/Gln) amidotransferase subunit B (503 aa).

It belongs to the GatB/GatE family. GatB subfamily. In terms of assembly, heterotrimer of A, B and C subunits.

The catalysed reaction is L-glutamyl-tRNA(Gln) + L-glutamine + ATP + H2O = L-glutaminyl-tRNA(Gln) + L-glutamate + ADP + phosphate + H(+). It catalyses the reaction L-aspartyl-tRNA(Asn) + L-glutamine + ATP + H2O = L-asparaginyl-tRNA(Asn) + L-glutamate + ADP + phosphate + 2 H(+). Functionally, allows the formation of correctly charged Asn-tRNA(Asn) or Gln-tRNA(Gln) through the transamidation of misacylated Asp-tRNA(Asn) or Glu-tRNA(Gln) in organisms which lack either or both of asparaginyl-tRNA or glutaminyl-tRNA synthetases. The reaction takes place in the presence of glutamine and ATP through an activated phospho-Asp-tRNA(Asn) or phospho-Glu-tRNA(Gln). This Cereibacter sphaeroides (strain ATCC 17025 / ATH 2.4.3) (Rhodobacter sphaeroides) protein is Aspartyl/glutamyl-tRNA(Asn/Gln) amidotransferase subunit B.